Here is a 148-residue protein sequence, read N- to C-terminus: Leghemoglobin 3 (148 aa).

In terms of domain architecture, Globin spans 2–148 (GFTEKQEALV…LSAAIKKAMS (147 aa)). Tyrosine 30 carries the nitrated tyrosine modification. Position 45 (serine 45) interacts with heme b. Serine 45 is modified (phosphoserine). Histidine 63 contributes to the O2 binding site. Lysine 66, histidine 95, and lysine 98 together coordinate heme b. The residue at position 136 (tyrosine 136) is a Nitrated tyrosine.

This sequence belongs to the plant globin family. As to quaternary structure, monomer. In terms of processing, nitrated in effective nodules and particularly in hypoxic conditions; this mechanism may play a protective role in the symbiosis by buffering toxic peroxynitrite NO(2)(-). Nitration level decrease during nodule senescence. Post-translationally, phosphorylation at Ser-45 disrupts the molecular environment of its porphyrin ring oxygen binding pocket, thus leading to a reduced oxygen consumption and to the delivery of oxygen O(2) to symbiosomes. In terms of tissue distribution, stem nodules.

The protein localises to the cytoplasm. It localises to the cytosol. It is found in the nucleus. In terms of biological role, leghemoglobin that reversibly binds oxygen O(2) through a pentacoordinated heme iron. In stem nodules, facilitates the diffusion of oxygen to the bacteroids while preventing the bacterial nitrogenase from being inactivated by buffering dioxygen, nitric oxide and carbon monoxide, and promoting the formation of reactive oxygen species (ROS, e.g. H(2)O(2)). This role is essential for symbiotic nitrogen fixation (SNF). This Sesbania rostrata protein is Leghemoglobin 3.